Consider the following 489-residue polypeptide: Mitochondrial-processing peptidase subunit beta (489 aa).

The transit peptide at 1-45 directs the protein to the mitochondrion; that stretch reads MAAAAVSRTLLPVAGRRLWGFTRRLPLRAAAAQPLYFGGDRLRST. Zn(2+) is bound at residue H101. Residue E104 is the Proton acceptor of the active site. Zn(2+) contacts are provided by H105 and E181.

This sequence belongs to the peptidase M16 family. In terms of assembly, heterodimer of PMPCA (alpha) and PMPCB (beta) subunits, forming the mitochondrial processing protease (MPP) in which PMPCA is involved in substrate recognition and binding and PMPCB is the catalytic subunit. Requires Zn(2+) as cofactor.

It is found in the mitochondrion matrix. The enzyme catalyses Release of N-terminal transit peptides from precursor proteins imported into the mitochondrion, typically with Arg in position P2.. Binding to PMPCA is required for catalytic activity. Catalytic subunit of the essential mitochondrial processing protease (MPP), which cleaves the mitochondrial sequence off newly imported precursors proteins. Preferentially, cleaves after an arginine at position P2. Required for PINK1 turnover by coupling PINK1 mitochondrial import and cleavage, which results in subsequent PINK1 proteolysis. This Rattus norvegicus (Rat) protein is Mitochondrial-processing peptidase subunit beta (Pmpcb).